Consider the following 359-residue polypeptide: DNA integrity scanning protein DisA (359 aa).

The 139-residue stretch at 7-145 (DDIFRATLAA…AGRRYVLDGA (139 aa)) folds into the DAC domain. ATP contacts are provided by residues glycine 74, leucine 92, and 105-109 (TRHRT).

This sequence belongs to the DisA family. In terms of assembly, homooctamer. Mg(2+) is required as a cofactor.

The catalysed reaction is 2 ATP = 3',3'-c-di-AMP + 2 diphosphate. In terms of biological role, participates in a DNA-damage check-point that is active prior to asymmetric division when DNA is damaged. DisA forms globular foci that rapidly scan along the chromosomes during sporulation, searching for lesions. When a lesion is present, DisA pauses at the lesion site. This triggers a cellular response that culminates in a temporary block in sporulation initiation. Its function is as follows. Also has diadenylate cyclase activity, catalyzing the condensation of 2 ATP molecules into cyclic di-AMP (c-di-AMP). c-di-AMP acts as a signaling molecule that couples DNA integrity with progression of sporulation. The rise in c-di-AMP level generated by DisA while scanning the chromosome, operates as a positive signal that advances sporulation; upon encountering a lesion, the DisA focus arrests at the damaged site and halts c-di-AMP synthesis. The sequence is that of DNA integrity scanning protein DisA from Parafrankia sp. (strain EAN1pec).